The following is a 166-amino-acid chain: UBA-like domain-containing protein 2-A (166 aa).

The tract at residues 120–166 is disordered; that stretch reads QQPVWLPPASPTTHLHHHHHHPQPVWPPNSQPTGGPQKAMAAMDGQR.

It belongs to the UBALD family.

The chain is UBA-like domain-containing protein 2-A (ubald2-a) from Xenopus laevis (African clawed frog).